We begin with the raw amino-acid sequence, 532 residues long: FRIGIDA-like protein 4a (532 aa).

The tract at residues 406-432 (KTEKRKPAAVPANKRTRASYNGPMPPA) is disordered.

The protein belongs to the Frigida family. In terms of tissue distribution, expressed in leaves, shoot apex, flowers and during seed development.

This Arabidopsis thaliana (Mouse-ear cress) protein is FRIGIDA-like protein 4a (FRL4A).